Consider the following 491-residue polypeptide: Aspartyl/glutamyl-tRNA(Asn/Gln) amidotransferase subunit B (491 aa).

It belongs to the GatB/GatE family. GatB subfamily. As to quaternary structure, heterotrimer of A, B and C subunits.

The enzyme catalyses L-glutamyl-tRNA(Gln) + L-glutamine + ATP + H2O = L-glutaminyl-tRNA(Gln) + L-glutamate + ADP + phosphate + H(+). The catalysed reaction is L-aspartyl-tRNA(Asn) + L-glutamine + ATP + H2O = L-asparaginyl-tRNA(Asn) + L-glutamate + ADP + phosphate + 2 H(+). In terms of biological role, allows the formation of correctly charged Asn-tRNA(Asn) or Gln-tRNA(Gln) through the transamidation of misacylated Asp-tRNA(Asn) or Glu-tRNA(Gln) in organisms which lack either or both of asparaginyl-tRNA or glutaminyl-tRNA synthetases. The reaction takes place in the presence of glutamine and ATP through an activated phospho-Asp-tRNA(Asn) or phospho-Glu-tRNA(Gln). This is Aspartyl/glutamyl-tRNA(Asn/Gln) amidotransferase subunit B from Paraburkholderia phytofirmans (strain DSM 17436 / LMG 22146 / PsJN) (Burkholderia phytofirmans).